The chain runs to 142 residues: Putative pre-16S rRNA nuclease (142 aa).

It belongs to the YqgF nuclease family.

Its subcellular location is the cytoplasm. Could be a nuclease involved in processing of the 5'-end of pre-16S rRNA. The chain is Putative pre-16S rRNA nuclease from Lactobacillus delbrueckii subsp. bulgaricus (strain ATCC BAA-365 / Lb-18).